The sequence spans 326 residues: Immune-associated nucleotide-binding protein 4 (326 aa).

One can recognise an AIG1-type G domain in the interval 17–225 (EPIKNIVLVG…FTDEMHRKIQ (209 aa)). The interval 26–33 (GRTGNGKS) is G1. GTP-binding positions include 26-34 (GRTGNGKSA) and Ser47. Residues 53–57 (GVTMK) form a G2 region. The segment at 75–78 (DTPG) is G3. Positions 145 to 148 (TGGD) are G4. Positions 184–186 (DNR) are G5. Asn185 is a GTP binding site. The stretch at 217-241 (TDEMHRKIQKEAETLREQQKEVESK) forms a coiled coil.

Belongs to the TRAFAC class TrmE-Era-EngA-EngB-Septin-like GTPase superfamily. AIG1/Toc34/Toc159-like paraseptin GTPase family. IAN subfamily. Expressed in radicles of the germinating seeds.

In Arabidopsis thaliana (Mouse-ear cress), this protein is Immune-associated nucleotide-binding protein 4.